Consider the following 310-residue polypeptide: Polyprenyl transferase ntnF (310 aa).

Transmembrane regions (helical) follow at residues 30-50 (HTPE…FYAI), 63-83 (FLGI…WNDI), 110-130 (AMVA…AMLG), 154-174 (IWAP…PPWV), 185-205 (LPAS…LIYA), 230-250 (ACLT…AFEA), 255-275 (FLWV…ILSL), and 286-306 (IFLV…TDVW).

The protein belongs to the UbiA prenyltransferase family. It depends on Mg(2+) as a cofactor.

The protein localises to the membrane. Its pathway is secondary metabolite biosynthesis; terpenoid biosynthesis. Olyprenyl transferase; part of the gene cluster that mediates the biosynthesis of the meroterpenoids nectripenoids A and B, as well as cochliquninone D and isocochliquninone E. The pathway probably begins with the HR-PKS ntnH that catalyzes two chain-extension steps to form a reduced triketide, which then primes the SAT domain in the NR-PKS ntnG to initiate three more cycles of extension to give a linear hexaketide corresponding to the polyketide part of nectripenoids. The FAD-dependent monooxygenase ntnJ then performs an oxidative decarboxylation at C11 of the ntnH/ntnG product, via an electrophilic aromatic hydroxylation with concomitant ipso-decarboxylation. The membrane-bound polyprenyl transferase ntnF then introduces a farnesyl group before the FAD-dependent monooxygenase ntnK functions as the first epoxidase on terminal C12'-C13' olefin, followed by a second epoxidation on C7'-C8' catalyzed by ntnA. The terpene cyclase/mutase ntnI then initiates the sequential tricyclic ring formation through protonation of the terminal epoxide and catalyzes the regioselective and stereoselective 6/6/6-tricyclic ring formation. The cytochrome P450 monooxygenase ntnM may then hydroxylate C1'. The polypeptide is Polyprenyl transferase ntnF (Nectria sp).